A 491-amino-acid polypeptide reads, in one-letter code: UDP-N-acetylmuramate--L-alanine ligase (491 aa).

126-132 (GTHGKTT) lines the ATP pocket.

The protein belongs to the MurCDEF family.

Its subcellular location is the cytoplasm. The catalysed reaction is UDP-N-acetyl-alpha-D-muramate + L-alanine + ATP = UDP-N-acetyl-alpha-D-muramoyl-L-alanine + ADP + phosphate + H(+). It functions in the pathway cell wall biogenesis; peptidoglycan biosynthesis. Functionally, cell wall formation. The protein is UDP-N-acetylmuramate--L-alanine ligase of Escherichia coli (strain SE11).